We begin with the raw amino-acid sequence, 466 residues long: Asparagine--tRNA ligase (466 aa).

The protein belongs to the class-II aminoacyl-tRNA synthetase family. As to quaternary structure, homodimer.

It is found in the cytoplasm. The catalysed reaction is tRNA(Asn) + L-asparagine + ATP = L-asparaginyl-tRNA(Asn) + AMP + diphosphate + H(+). The polypeptide is Asparagine--tRNA ligase (Shewanella frigidimarina (strain NCIMB 400)).